The following is a 529-amino-acid chain: Pheophorbide a oxygenase, chloroplastic (529 aa).

Disordered stretches follow at residues 1–24 and 46–72; these read MPVM…RRVP and LRVA…TSSA. A chloroplast-targeting transit peptide spans 1–47; sequence MPVMAPTASLLLSPRPLPASRRVPSLPALSASGRLRLRRARADTRLR. The region spanning 82–194 is the Rieske domain; that stretch reads WYPVSLVEDL…TLVSQGLLFV (113 aa). Residues Cys124, His126, Cys144, and His147 each contribute to the [2Fe-2S] cluster site.

[2Fe-2S] cluster is required as a cofactor. As to expression, expressed in leaves. Expressed at low levels in roots, stems, panicles and seeds.

It is found in the plastid. The protein resides in the chloroplast. The catalysed reaction is pheophorbide a + 2 reduced [2Fe-2S]-[ferredoxin] + O2 + 2 H(+) = red chlorophyll catabolite + 2 oxidized [2Fe-2S]-[ferredoxin]. It functions in the pathway porphyrin-containing compound metabolism; chlorophyll degradation. Catalyzes the key reaction of chlorophyll catabolism, porphyrin macrocycle cleavage of pheophorbide a (pheide a) to a primary fluorescent catabolite (pFCC). Works in a two-step reaction with red chlorophyll catabolite reductase (RCCR). Creates the intermediate RCC through the opening of the porphyrin macrocycle by the introduction of one atom of molecular oxygen at the alpha-methine bridge. Seems to be specific for pheide a. Belongs to the chlorophyll catabolic enzymes (CCEs). May play a role in senescence and response to wounding. In Oryza sativa subsp. japonica (Rice), this protein is Pheophorbide a oxygenase, chloroplastic.